The chain runs to 371 residues: Heterodimeric geranylgeranyl pyrophosphate synthase large subunit 1, chloroplastic (371 aa).

The transit peptide at 1–51 (MASVTLGSWIVVHHHNHHHPSSILTKSRSRSCPITLTKPISFRSKRTVSSS) directs the protein to the chloroplast. Ser52 carries the post-translational modification N-acetylserine. The isopentenyl diphosphate site is built by Lys116, Arg119, and His148. Residues Asp155 and Asp161 each contribute to the Mg(2+) site. Dimethylallyl diphosphate is bound at residue Arg166. Arg167 contacts isopentenyl diphosphate. The dimethylallyl diphosphate site is built by Lys256, Thr257, Gln294, Lys311, and Lys321.

It belongs to the FPP/GGPP synthase family. In terms of assembly, forms homodimers. Part of a heterodimeric geranyl(geranyl)diphosphate synthase. Interacts with GGR. It depends on Mg(2+) as a cofactor. In terms of tissue distribution, expressed ubiquitously.

It is found in the plastid. It localises to the chloroplast. Its subcellular location is the cytoplasm. The catalysed reaction is isopentenyl diphosphate + dimethylallyl diphosphate = (2E)-geranyl diphosphate + diphosphate. It carries out the reaction isopentenyl diphosphate + (2E)-geranyl diphosphate = (2E,6E)-farnesyl diphosphate + diphosphate. It catalyses the reaction isopentenyl diphosphate + (2E,6E)-farnesyl diphosphate = (2E,6E,10E)-geranylgeranyl diphosphate + diphosphate. It functions in the pathway isoprenoid biosynthesis; farnesyl diphosphate biosynthesis; farnesyl diphosphate from geranyl diphosphate and isopentenyl diphosphate: step 1/1. Its pathway is isoprenoid biosynthesis; geranyl diphosphate biosynthesis; geranyl diphosphate from dimethylallyl diphosphate and isopentenyl diphosphate: step 1/1. It participates in isoprenoid biosynthesis; geranylgeranyl diphosphate biosynthesis; geranylgeranyl diphosphate from farnesyl diphosphate and isopentenyl diphosphate: step 1/1. Its function is as follows. Heterodimeric geranyl(geranyl)-diphosphate (GPP) synthase large subunit. In vitro, the large subunit catalyzes mainly the trans-addition of the three molecules of IPP onto DMAPP to form geranylgeranyl pyrophosphate while the small subunit alone is inactive. Upon association of the two subunits, the product profile changes and the production of gerany-diphosphate is strongly increased. This chain is Heterodimeric geranylgeranyl pyrophosphate synthase large subunit 1, chloroplastic (GGPPS1), found in Arabidopsis thaliana (Mouse-ear cress).